Reading from the N-terminus, the 379-residue chain is Demethylspheroidene O-methyltransferase (379 aa).

D235 and R279 together coordinate S-adenosyl-L-methionine.

It belongs to the class I-like SAM-binding methyltransferase superfamily. Cation-independent O-methyltransferase family.

The enzyme catalyses demethylspheroidene + S-adenosyl-L-methionine = spheroidene + S-adenosyl-L-homocysteine + H(+). It functions in the pathway carotenoid biosynthesis; spheroidene biosynthesis. Functionally, methyltransferase that mediates the O-methylation of 1-hydroxy carotenoids. Converts hydroxyneurosporene to methoxyneurosporene or demethylspheroidene to spheroidene. Also able to produce spirilloxanthin. The chain is Demethylspheroidene O-methyltransferase (crtF) from Cereibacter sphaeroides (strain ATCC 17023 / DSM 158 / JCM 6121 / CCUG 31486 / LMG 2827 / NBRC 12203 / NCIMB 8253 / ATH 2.4.1.) (Rhodobacter sphaeroides).